We begin with the raw amino-acid sequence, 245 residues long: 5-oxoprolinase subunit A (245 aa).

The protein belongs to the LamB/PxpA family. In terms of assembly, forms a complex composed of PxpA, PxpB and PxpC.

It carries out the reaction 5-oxo-L-proline + ATP + 2 H2O = L-glutamate + ADP + phosphate + H(+). Its function is as follows. Catalyzes the cleavage of 5-oxoproline to form L-glutamate coupled to the hydrolysis of ATP to ADP and inorganic phosphate. The polypeptide is 5-oxoprolinase subunit A (Cronobacter sakazakii (strain ATCC BAA-894) (Enterobacter sakazakii)).